The chain runs to 861 residues: DNA mismatch repair protein MutS (861 aa).

613–620 (GPNMGGKS) is an ATP binding site.

This sequence belongs to the DNA mismatch repair MutS family.

This protein is involved in the repair of mismatches in DNA. It is possible that it carries out the mismatch recognition step. This protein has a weak ATPase activity. This is DNA mismatch repair protein MutS from Dichelobacter nodosus (strain VCS1703A).